Reading from the N-terminus, the 193-residue chain is Ubiquitin-conjugating enzyme E2 E1 (193 aa).

Residues 1–45 (MSDDDSRASTSSSSSSSSNQQTEKETNTPKKKESKVSMSKNSKLL) form a disordered region. S2 is subject to N-acetylserine. Positions 8–18 (ASTSSSSSSSS) are enriched in low complexity. Positions 22–35 (TEKETNTPKKKESK) are enriched in basic and acidic residues. The span at 36–45 (VSMSKNSKLL) shows a compositional bias: polar residues. A UBC core domain is found at 47–193 (TSAKRIQKEL…ARQWTKRYAT (147 aa)). Residue C131 is the Glycyl thioester intermediate of the active site. Residue K136 forms a Glycyl lysine isopeptide (Lys-Gly) (interchain with G-Cter in ISG15) linkage.

It belongs to the ubiquitin-conjugating enzyme family. Interacts with RNF14. ISGylation suppresses ubiquitin E2 enzyme activity. Post-translationally, autoubiquitinated in vitro.

It localises to the nucleus. The catalysed reaction is S-ubiquitinyl-[E1 ubiquitin-activating enzyme]-L-cysteine + [E2 ubiquitin-conjugating enzyme]-L-cysteine = [E1 ubiquitin-activating enzyme]-L-cysteine + S-ubiquitinyl-[E2 ubiquitin-conjugating enzyme]-L-cysteine.. It catalyses the reaction S-ubiquitinyl-[E1 ubiquitin-activating enzyme]-L-cysteine + [acceptor protein]-L-lysine = [E1 ubiquitin-activating enzyme]-L-cysteine + N(6)-monoubiquitinyl-[acceptor protein]-L-lysine.. The protein operates within protein modification; protein ubiquitination. Its function is as follows. Accepts ubiquitin from the E1 complex and catalyzes its covalent attachment to other proteins. Catalyzes the covalent attachment of ISG15 to other proteins. Mediates the selective degradation of short-lived and abnormal proteins. In vitro also catalyzes 'Lys-48'-linked polyubiquitination. Catalyzes monoubiquitination of other proteins in both an E3-dependent and E3-independent manner. The polypeptide is Ubiquitin-conjugating enzyme E2 E1 (Homo sapiens (Human)).